Here is a 1235-residue protein sequence, read N- to C-terminus: Major DNA-binding protein (1235 aa).

Residues 536-584 (GGLDGKGDDGVPGGGAGGGGGRDVSGGPSDGLGGGRGGGGGGDSGGMMG) are disordered. Positions 545 to 584 (GVPGGGAGGGGGRDVSGGPSDGLGGGRGGGGGGDSGGMMG) are enriched in gly residues. Positions 846–847 (FW) match the Required for filament formation motif. Residues 1214–1226 (GVGGSSGGGGGSG) show a composition bias toward gly residues. The segment at 1214–1235 (GVGGSSGGGGGSGLLPAKRSRL) is disordered. The interval 1232–1235 (RSRL) is required for nuclear localization.

The protein belongs to the herpesviridae major DNA-binding protein family. Homooligomers. Forms double-helical filaments necessary for the formation of replication compartments within the host nucleus. Interacts with the origin-binding protein. Interacts with the helicase primase complex; this interaction stimulates primer synthesis activity of the helicase-primase complex. Interacts with the DNA polymerase. Interacts with the alkaline exonuclease; this interaction increases its nuclease processivity.

It localises to the host nucleus. Plays several crucial roles in viral infection. Participates in the opening of the viral DNA origin to initiate replication by interacting with the origin-binding protein. May disrupt loops, hairpins and other secondary structures present on ssDNA to reduce and eliminate pausing of viral DNA polymerase at specific sites during elongation. Promotes viral DNA recombination by performing strand-transfer, characterized by the ability to transfer a DNA strand from a linear duplex to a complementary single-stranded DNA circle. Can also catalyze the renaturation of complementary single strands. Additionally, reorganizes the host cell nucleus, leading to the formation of prereplicative sites and replication compartments. This process is driven by the protein which can form double-helical filaments in the absence of DNA. The protein is Major DNA-binding protein of Homo sapiens (Human).